The sequence spans 300 residues: N-acetylmannosamine kinase (300 aa).

ATP is bound by residues Ala-5–Lys-12 and Gly-132–Leu-139. Residues His-156, Cys-166, Cys-168, and Cys-173 each coordinate Zn(2+).

Belongs to the ROK (NagC/XylR) family. NanK subfamily. As to quaternary structure, homodimer.

The enzyme catalyses an N-acyl-D-mannosamine + ATP = an N-acyl-D-mannosamine 6-phosphate + ADP + H(+). The protein operates within amino-sugar metabolism; N-acetylneuraminate degradation; D-fructose 6-phosphate from N-acetylneuraminate: step 2/5. In terms of biological role, catalyzes the phosphorylation of N-acetylmannosamine (ManNAc) to ManNAc-6-P. This is N-acetylmannosamine kinase from Haemophilus influenzae (strain PittEE).